The following is a 646-amino-acid chain: Peptidylprolyl isomerase domain and WD repeat-containing protein 1 (646 aa).

The tract at residues 1–50 (MATESGSDSQLRRRRRRDPEGSEKTELSEREPALAVAGSEENDDENEERW) is disordered. Residue Ala-2 is modified to N-acetylalanine. Residues 17–32 (RDPEGSEKTELSEREP) show a composition bias toward basic and acidic residues. 4 WD repeats span residues 88-126 (MHRD…IEFV), 131-170 (SHLG…MINM), 221-260 (LHVS…YKFP), and 278-319 (KCKA…RVFD). One can recognise a PPIase cyclophilin-type domain in the interval 490–645 (VSDSAIVHTS…EDVSIINITV (156 aa)).

This sequence belongs to the cyclophilin-type PPIase family. PPIL1 subfamily. In terms of assembly, identified in the spliceosome C complex.

The protein localises to the nucleus. It carries out the reaction [protein]-peptidylproline (omega=180) = [protein]-peptidylproline (omega=0). Its activity is regulated as follows. Inhibited by cyclosporin A (CsA). Its function is as follows. PPIase that catalyzes the cis-trans isomerization of proline imidic peptide bonds in oligopeptides and may therefore assist protein folding. May be involved in pre-mRNA splicing. The protein is Peptidylprolyl isomerase domain and WD repeat-containing protein 1 of Mus musculus (Mouse).